The chain runs to 86 residues: Protein Tat (86 aa).

The segment at 1–21 (MDPVDPNLEPWNHPGSQPKTA) is disordered. The interaction with human CREBBP stretch occupies residues 1 to 24 (MDPVDPNLEPWNHPGSQPKTACNR). The transactivation stretch occupies residues 1-48 (MDPVDPNLEPWNHPGSQPKTACNRCHCKKCCYHCQVCFITKGLGISYG). Zn(2+) is bound by residues Cys-22, Cys-25, and Cys-27. The tract at residues 22–37 (CNRCHCKKCCYHCQVC) is cysteine-rich. Position 28 is an N6-acetyllysine; by host PCAF (Lys-28). 4 residues coordinate Zn(2+): Cys-30, His-33, Cys-34, and Cys-37. Residues 38 to 48 (FITKGLGISYG) are core. Residues 47-86 (YGRKKRRQRRRPSQGGQTHQDPIPKQPSSQPRGNPTGPKE) are disordered. Basic residues predominate over residues 48–58 (GRKKRRQRRRP). The Nuclear localization signal, RNA-binding (TAR), and protein transduction motif lies at 49–57 (RKKRRQRRR). The interval 49–86 (RKKRRQRRRPSQGGQTHQDPIPKQPSSQPRGNPTGPKE) is interaction with the host capping enzyme RNGTT. Lys-50 and Lys-51 each carry N6-acetyllysine; by host EP300 and GCN5L2. 2 positions are modified to asymmetric dimethylarginine; by host PRMT6: Arg-52 and Arg-53. Positions 60–79 (QGGQTHQDPIPKQPSSQPRG) are enriched in polar residues. Lys-71 participates in a covalent cross-link: Glycyl lysine isopeptide (Lys-Gly) (interchain with G-Cter in ubiquitin).

Belongs to the lentiviruses Tat family. As to quaternary structure, interacts with host CCNT1. Associates with the P-TEFb complex composed at least of Tat, P-TEFb (CDK9 and CCNT1), TAR RNA, RNA Pol II. Recruits the HATs CREBBP, TAF1/TFIID, EP300, PCAF and GCN5L2. Interacts with host KAT5/Tip60; this interaction targets the latter to degradation. Interacts with the host deacetylase SIRT1. Interacts with host capping enzyme RNGTT; this interaction stimulates RNGTT. Binds to host KDR, and to the host integrins ITGAV/ITGB3 and ITGA5/ITGB1. Interacts with host KPNB1/importin beta-1 without previous binding to KPNA1/importin alpha-1. Interacts with EIF2AK2. Interacts with host nucleosome assembly protein NAP1L1; this interaction may be required for the transport of Tat within the nucleus, since the two proteins interact at the nuclear rim. Interacts with host C1QBP/SF2P32; this interaction involves lysine-acetylated Tat. Interacts with the host chemokine receptors CCR2, CCR3 and CXCR4. Interacts with host DPP4/CD26; this interaction may trigger an anti-proliferative effect. Interacts with host LDLR. Interacts with the host extracellular matrix metalloproteinase MMP1. Interacts with host PRMT6; this interaction mediates Tat's methylation. Interacts with, and is ubiquitinated by MDM2/Hdm2. Interacts with host PSMC3 and HTATIP2. Interacts with STAB1; this interaction may overcome SATB1-mediated repression of IL2 and IL2RA (interleukin) in T cells by binding to the same domain than HDAC1. Interacts (when acetylated) with human CDK13, thereby increasing HIV-1 mRNA splicing and promoting the production of the doubly spliced HIV-1 protein Nef. Interacts with host TBP; this interaction modulates the activity of transcriptional pre-initiation complex. Interacts with host RELA. Interacts with host PLSCR1; this interaction negatively regulates Tat transactivation activity by altering its subcellular distribution. In terms of processing, asymmetrical arginine methylation by host PRMT6 seems to diminish the transactivation capacity of Tat and affects the interaction with host CCNT1. Acetylation by EP300, CREBBP, GCN5L2/GCN5 and PCAF regulates the transactivation activity of Tat. EP300-mediated acetylation of Lys-50 promotes dissociation of Tat from the TAR RNA through the competitive binding to PCAF's bromodomain. In addition, the non-acetylated Tat's N-terminus can also interact with PCAF. PCAF-mediated acetylation of Lys-28 enhances Tat's binding to CCNT1. Lys-50 is deacetylated by SIRT1. Post-translationally, polyubiquitination by host MDM2 does not target Tat to degradation, but activates its transactivation function and fosters interaction with CCNT1 and TAR RNA. In terms of processing, phosphorylated by EIF2AK2 on serine and threonine residues adjacent to the basic region important for TAR RNA binding and function. Phosphorylation of Tat by EIF2AK2 is dependent on the prior activation of EIF2AK2 by dsRNA.

The protein localises to the host nucleus. It is found in the host nucleolus. It localises to the host cytoplasm. Its subcellular location is the secreted. In terms of biological role, transcriptional activator that increases RNA Pol II processivity, thereby increasing the level of full-length viral transcripts. Recognizes a hairpin structure at the 5'-LTR of the nascent viral mRNAs referred to as the transactivation responsive RNA element (TAR) and recruits the cyclin T1-CDK9 complex (P-TEFb complex) that will in turn hyperphosphorylate the RNA polymerase II to allow efficient elongation. The CDK9 component of P-TEFb and other Tat-activated kinases hyperphosphorylate the C-terminus of RNA Pol II that becomes stabilized and much more processive. Other factors such as HTATSF1/Tat-SF1, SUPT5H/SPT5, and HTATIP2 are also important for Tat's function. Besides its effect on RNA Pol II processivity, Tat induces chromatin remodeling of proviral genes by recruiting the histone acetyltransferases (HATs) CREBBP, EP300 and PCAF to the chromatin. This also contributes to the increase in proviral transcription rate, especially when the provirus integrates in transcriptionally silent region of the host genome. To ensure maximal activation of the LTR, Tat mediates nuclear translocation of NF-kappa-B by interacting with host RELA. Through its interaction with host TBP, Tat may also modulate transcription initiation. Tat can reactivate a latently infected cell by penetrating in it and transactivating its LTR promoter. In the cytoplasm, Tat is thought to act as a translational activator of HIV-1 mRNAs. Its function is as follows. Extracellular circulating Tat can be endocytosed by surrounding uninfected cells via the binding to several surface receptors such as CD26, CXCR4, heparan sulfate proteoglycans (HSPG) or LDLR. Neurons are rarely infected, but they internalize Tat via their LDLR. Through its interaction with nuclear HATs, Tat is potentially able to control the acetylation-dependent cellular gene expression. Modulates the expression of many cellular genes involved in cell survival, proliferation or in coding for cytokines or cytokine receptors. Tat plays a role in T-cell and neurons apoptosis. Tat induced neurotoxicity and apoptosis probably contribute to neuroAIDS. Circulating Tat also acts as a chemokine-like and/or growth factor-like molecule that binds to specific receptors on the surface of the cells, affecting many cellular pathways. In the vascular system, Tat binds to ITGAV/ITGB3 and ITGA5/ITGB1 integrins dimers at the surface of endothelial cells and competes with bFGF for heparin-binding sites, leading to an excess of soluble bFGF. This chain is Protein Tat, found in Homo sapiens (Human).